The chain runs to 1323 residues: DNA-directed RNA polymerase subunit beta' (1323 aa).

Cys-60, Cys-62, Cys-75, and Cys-78 together coordinate Zn(2+). Mg(2+) is bound by residues Asp-535, Asp-537, and Asp-539. Zn(2+)-binding residues include Cys-894, Cys-977, Cys-984, and Cys-987.

The protein belongs to the RNA polymerase beta' chain family. As to quaternary structure, the RNAP catalytic core consists of 2 alpha, 1 beta, 1 beta' and 1 omega subunit. When a sigma factor is associated with the core the holoenzyme is formed, which can initiate transcription. Mg(2+) is required as a cofactor. Requires Zn(2+) as cofactor.

The enzyme catalyses RNA(n) + a ribonucleoside 5'-triphosphate = RNA(n+1) + diphosphate. Functionally, DNA-dependent RNA polymerase catalyzes the transcription of DNA into RNA using the four ribonucleoside triphosphates as substrates. The sequence is that of DNA-directed RNA polymerase subunit beta' from Corynebacterium urealyticum (strain ATCC 43042 / DSM 7109).